Here is a 193-residue protein sequence, read N- to C-terminus: Putative anthranilate synthase component II (193 aa).

The 192-residue stretch at 2–193 (KLLIINNHDS…WLAIPPTTNP (192 aa)) folds into the Glutamine amidotransferase type-1 domain. Residues Cys78, His168, and Glu170 contribute to the active site.

Tetramer of two components I and two components II.

It carries out the reaction chorismate + L-glutamine = anthranilate + pyruvate + L-glutamate + H(+). Its pathway is amino-acid biosynthesis; L-tryptophan biosynthesis; L-tryptophan from chorismate: step 1/5. In Haemophilus influenzae (strain ATCC 51907 / DSM 11121 / KW20 / Rd), this protein is Putative anthranilate synthase component II.